Reading from the N-terminus, the 285-residue chain is DNA repair protein RecO (285 aa).

Belongs to the RecO family.

In terms of biological role, involved in DNA repair and RecF pathway recombination. In Synechococcus sp. (strain JA-2-3B'a(2-13)) (Cyanobacteria bacterium Yellowstone B-Prime), this protein is DNA repair protein RecO.